Reading from the N-terminus, the 359-residue chain is DNA integrity scanning protein DisA (359 aa).

One can recognise a DAC domain in the interval D7–A146. Residues G74, L92, and T105 to T109 contribute to the ATP site.

Belongs to the DisA family. Homooctamer. Mg(2+) serves as cofactor.

The enzyme catalyses 2 ATP = 3',3'-c-di-AMP + 2 diphosphate. Participates in a DNA-damage check-point that is active prior to asymmetric division when DNA is damaged. DisA forms globular foci that rapidly scan along the chromosomes during sporulation, searching for lesions. When a lesion is present, DisA pauses at the lesion site. This triggers a cellular response that culminates in a temporary block in sporulation initiation. Its function is as follows. Also has diadenylate cyclase activity, catalyzing the condensation of 2 ATP molecules into cyclic di-AMP (c-di-AMP). c-di-AMP acts as a signaling molecule that couples DNA integrity with progression of sporulation. The rise in c-di-AMP level generated by DisA while scanning the chromosome, operates as a positive signal that advances sporulation; upon encountering a lesion, the DisA focus arrests at the damaged site and halts c-di-AMP synthesis. This chain is DNA integrity scanning protein DisA, found in Frankia alni (strain DSM 45986 / CECT 9034 / ACN14a).